Reading from the N-terminus, the 328-residue chain is DNA-directed RNA polymerase subunit alpha 2 (328 aa).

Residues 1 to 234 (MQGSVIEFLK…EQLDAFVDLR (234 aa)) form an alpha N-terminal domain (alpha-NTD) region. Positions 248-328 (FDPILLRPVD…NWPPASLSED (81 aa)) are alpha C-terminal domain (alpha-CTD).

This sequence belongs to the RNA polymerase alpha chain family. Homodimer. The RNAP catalytic core consists of 2 alpha, 1 beta, 1 beta' and 1 omega subunit. When a sigma factor is associated with the core the holoenzyme is formed, which can initiate transcription.

It carries out the reaction RNA(n) + a ribonucleoside 5'-triphosphate = RNA(n+1) + diphosphate. Its function is as follows. DNA-dependent RNA polymerase catalyzes the transcription of DNA into RNA using the four ribonucleoside triphosphates as substrates. This chain is DNA-directed RNA polymerase subunit alpha 2, found in Psychromonas ingrahamii (strain DSM 17664 / CCUG 51855 / 37).